The primary structure comprises 536 residues: Proto-oncogene tyrosine-protein kinase Src (536 aa).

The tract at residues 1–53 (MGSNKSKPKDASQRRRSLEPAENVHGAGGGAFPASQTPSKPASADGHRGPSAA) is disordered. Glycine 2 carries N-myristoyl glycine lipidation. Residues 7–19 (KPKDASQRRRSLE) are compositionally biased toward basic and acidic residues. Serine 17 carries the post-translational modification Phosphoserine. Serine 75 is subject to Phosphoserine; by CDK5. One can recognise an SH3 domain in the interval 84-145 (GGVTTFVALY…PSNYVAPSDS (62 aa)). Positions 151-248 (WYFGKITRRE…GLCHRLTTVC (98 aa)) constitute an SH2 domain. Position 187 is a phosphotyrosine (tyrosine 187). The Protein kinase domain occupies 270–523 (LRLEVKLGQG…YLQAFLEDYF (254 aa)). ATP contacts are provided by residues 276-284 (LGQGCFGEV) and lysine 298. Residue aspartate 389 is the Proton acceptor of the active site. Phosphotyrosine; by autocatalysis is present on tyrosine 419. Residue tyrosine 419 is modified to Phosphotyrosine; by FAK2. Tyrosine 530 is modified (phosphotyrosine; by CSK).

Belongs to the protein kinase superfamily. Tyr protein kinase family. SRC subfamily. Part of a complex comprised of PTPRA, BCAR1, BCAR3 (via SH2 domain) and SRC; the formation of the complex is dependent on integrin mediated-tyrosine phosphorylation of PTPRA. Interacts with DDEF1/ASAP1; via the SH3 domain. Interacts with CCPG1. Identified in a complex containing FGFR4, NCAM1, CDH2, PLCG1, FRS2, SRC, SHC1, GAP43 and CTTN. Interacts with ERBB2, STAT1 and PNN. Interacts with DDR1, DDR2 and DAB2. Interacts with CDCP1, TGFB1I1 and TOM1L2. Interacts with the cytoplasmic domain of MUC1, phosphorylates it and increases binding of MUC1 with beta-catenin. Interacts with RALGPS1; via the SH3 domain. Interacts with CAV2 (tyrosine phosphorylated form). Interacts (via the SH3 domain and the protein kinase domain) with ARRB1; the interaction is independent of the phosphorylation state of SRC C-terminus. Interacts with ARRB1 and ARRB2. Interacts with SRCIN1. Interacts with NDFIP2 and more weakly with NDFIP1. Interacts with PIK3CA and/or PIK3C2B, PTK2/FAK1 and ESR1 (dimethylated on arginine). Interacts with FASLG. Interacts (via SH2 domain) with the 'Tyr-402' phosphorylated form of PTK2B/PYK2. Interacts (via SH2 domain) with FLT3 (tyrosine phosphorylated). Interacts with PDGFRA (tyrosine phosphorylated). Interacts with CSF1R. Interacts (via SH2 and SH3 domain) with TNK2. Interacts (via protein kinase domain) with the tyrosine phosphorylated form of RUNX3 (via runt domain). Interacts with TRAF3 (via RING-type zinc finger domain). Interacts with RIGI, MAVS and TBK1. Interacts (via SH2 domain) with RACK1; the interaction is enhanced by tyrosine phosphorylation of RACK1 and inhibits SRC activity. Interacts with EPHB1; activates the MAPK/ERK cascade to regulate cell migration. Interacts with FCAMR. Interacts (via SH2 domain) with the 'Tyr-9' phosphorylated form of PDPK1. Interacts with AMOTL2; this interaction regulates the translocation of phosphorylated SRC to peripheral cell-matrix adhesion sites. Interacts with TRAP1. Interacts with CBLC; the interaction is enhanced when SRC is phosphorylated at Tyr-419. Interacts with ARHGEF5. Interacts (via cytoplasmic domain) with CEACAM1 (via SH2 domain); this interaction is regulated by trans-homophilic cell adhesion. Interacts with MPP2. Interacts with PRR7. Interacts (via kinase domain and to a lesser extent the SH2 domain) directly with PDLIM4; this interaction results in PTPN13-mediated dephosphorylation of this protein leading to its inactivation. Interacts with P85 (PIK3R1 or PIK3R2). Interacts with HNRNPA2B1. Interacts with IL6ST/gp130. Interacts (via SH3 domain) with PELP1 in the presence of 17-beta-estradiol. Interacts with AMBRA1. In terms of assembly, (Microbial infection) Interacts with HEV ORF3 protein; via the SH3 domain. As to quaternary structure, (Microbial infection) Interacts (via SH2 domain) with HCV non-structural protein 5A (via N-terminus). In terms of processing, myristoylated at Gly-2, and this is essential for targeting to membranes. Post-translationally, dephosphorylated at Tyr-530 by PTPRJ. Phosphorylated on Tyr-530 by c-Src kinase (CSK). The phosphorylated form is termed pp60c-src. Dephosphorylated by PTPRJ at Tyr-419. Normally maintained in an inactive conformation with the SH2 domain engaged with Tyr-530, the SH3 domain engaged with the SH2-kinase linker, and Tyr-419 dephosphorylated. Dephosphorylation of Tyr-530 as a result of protein tyrosine phosphatase (PTP) action disrupts the intramolecular interaction between the SH2 domain and Tyr-530, Tyr-419 can then become autophosphorylated, resulting in SRC activation. Phosphorylation of Tyr-530 by CSK allows this interaction to reform, resulting in SRC inactivation. CDK5-mediated phosphorylation at Ser-75 targets SRC to ubiquitin-dependent degradation and thus leads to cytoskeletal reorganization. Phosphorylated by PTK2/FAK1; this enhances kinase activity. Phosphorylated by PTK2B/PYK2; this enhances kinase activity. Upon activation of IL6ST by IL6, Tyr-419 is phosphorylated and Tyr-530 dephosphorylated. Displays reduced levels of autophosphorylation at Tyr-419 compared to isoforms 2 and 3. In terms of processing, displays enhanced levels of autophosphorylation at Tyr-419 compared to isoform 1. Post-translationally, displays enhanced levels of autophosphorylation at Tyr-419 compared to isoform 1. Shows reduced phosphorylation at Tyr-527 compared to isoforms 1 and 2. S-nitrosylation is important for activation of its kinase activity. In terms of processing, ubiquitinated in response to CDK5-mediated phosphorylation. Ubiquitination mediated by CBLC requires SRC autophosphorylation at Tyr-419 and may lead to lysosomal degradation. As to expression, expressed ubiquitously. Expressed in the skin (at protein level). Platelets, neurons and osteoclasts express 5-fold to 200-fold higher levels than most other tissues. Expressed in spleen and liver. In terms of tissue distribution, expressed in brain.

It localises to the cell membrane. The protein localises to the mitochondrion inner membrane. It is found in the nucleus. Its subcellular location is the cytoplasm. The protein resides in the cytoskeleton. It localises to the perinuclear region. The protein localises to the cell junction. It is found in the focal adhesion. The enzyme catalyses L-tyrosyl-[protein] + ATP = O-phospho-L-tyrosyl-[protein] + ADP + H(+). Its activity is regulated as follows. Phosphorylation by CSK at Tyr-530 inhibits kinase activity. Inhibitory phosphorylation at Tyr-530 is enhanced by heme. Further phosphorylation by CDK1 partially reactivates CSK-inactivated SRC and facilitates complete reactivation by protein tyrosine phosphatase PTPRC. Integrin engagement stimulates kinase activity. Phosphorylation by PTK2/FAK1 enhances kinase activity. Butein and pseudosubstrate-based peptide inhibitors like CIYKYYF act as inhibitors. Phosphorylation at Tyr-419 increases kinase activity. In terms of biological role, non-receptor protein tyrosine kinase which is activated following engagement of many different classes of cellular receptors including immune response receptors, integrins and other adhesion receptors, receptor protein tyrosine kinases, G protein-coupled receptors as well as cytokine receptors. Participates in signaling pathways that control a diverse spectrum of biological activities including gene transcription, immune response, cell adhesion, cell cycle progression, apoptosis, migration, and transformation. Due to functional redundancy between members of the SRC kinase family, identification of the specific role of each SRC kinase is very difficult. SRC appears to be one of the primary kinases activated following engagement of receptors and plays a role in the activation of other protein tyrosine kinase (PTK) families. Receptor clustering or dimerization leads to recruitment of SRC to the receptor complexes where it phosphorylates the tyrosine residues within the receptor cytoplasmic domains. Plays an important role in the regulation of cytoskeletal organization through phosphorylation of specific substrates such as AFAP1. Phosphorylation of AFAP1 allows the SRC SH2 domain to bind AFAP1 and to localize to actin filaments. Cytoskeletal reorganization is also controlled through the phosphorylation of cortactin (CTTN). When cells adhere via focal adhesions to the extracellular matrix, signals are transmitted by integrins into the cell resulting in tyrosine phosphorylation of a number of focal adhesion proteins, including PTK2/FAK1 and paxillin (PXN). In addition to phosphorylating focal adhesion proteins, SRC is also active at the sites of cell-cell contact adherens junctions and phosphorylates substrates such as beta-catenin (CTNNB1), delta-catenin (CTNND1), and plakoglobin (JUP). Another type of cell-cell junction, the gap junction, is also a target for SRC, which phosphorylates connexin-43 (GJA1). SRC is implicated in regulation of pre-mRNA-processing and phosphorylates RNA-binding proteins such as KHDRBS1. Phosphorylates PKP3 at 'Tyr-195' in response to reactive oxygen species, which may cause the release of PKP3 from desmosome cell junctions into the cytoplasm. Also plays a role in PDGF-mediated tyrosine phosphorylation of both STAT1 and STAT3, leading to increased DNA binding activity of these transcription factors. Involved in the RAS pathway through phosphorylation of RASA1 and RASGRF1. Plays a role in EGF-mediated calcium-activated chloride channel activation. Required for epidermal growth factor receptor (EGFR) internalization through phosphorylation of clathrin heavy chain (CLTC and CLTCL1) at 'Tyr-1477'. Involved in beta-arrestin (ARRB1 and ARRB2) desensitization through phosphorylation and activation of GRK2, leading to beta-arrestin phosphorylation and internalization. Has a critical role in the stimulation of the CDK20/MAPK3 mitogen-activated protein kinase cascade by epidermal growth factor. Might be involved not only in mediating the transduction of mitogenic signals at the level of the plasma membrane but also in controlling progression through the cell cycle via interaction with regulatory proteins in the nucleus. Plays an important role in osteoclastic bone resorption in conjunction with PTK2B/PYK2. Both the formation of a SRC-PTK2B/PYK2 complex and SRC kinase activity are necessary for this function. Recruited to activated integrins by PTK2B/PYK2, thereby phosphorylating CBL, which in turn induces the activation and recruitment of phosphatidylinositol 3-kinase to the cell membrane in a signaling pathway that is critical for osteoclast function. Promotes energy production in osteoclasts by activating mitochondrial cytochrome C oxidase. Phosphorylates DDR2 on tyrosine residues, thereby promoting its subsequent autophosphorylation. Phosphorylates RUNX3 and COX2 on tyrosine residues, TNK2 on 'Tyr-284' and CBL on 'Tyr-731'. Enhances RIGI-elicited antiviral signaling. Phosphorylates PDPK1 at 'Tyr-9', 'Tyr-373' and 'Tyr-376'. Phosphorylates BCAR1 at 'Tyr-128'. Phosphorylates CBLC at multiple tyrosine residues, phosphorylation at 'Tyr-341' activates CBLC E3 activity. Phosphorylates synaptic vesicle protein synaptophysin (SYP). Involved in anchorage-independent cell growth. Required for podosome formation. Mediates IL6 signaling by activating YAP1-NOTCH pathway to induce inflammation-induced epithelial regeneration. Phosphorylates OTUB1, promoting deubiquitination of RPTOR. Phosphorylates caspase CASP8 at 'Tyr-380' which negatively regulates CASP8 processing and activation, down-regulating CASP8 proapoptotic function. Non-receptor protein tyrosine kinase which phosphorylates synaptophysin with high affinity. Its function is as follows. Non-receptor protein tyrosine kinase which shows higher basal kinase activity than isoform 1, possibly due to weakened intramolecular interactions which enhance autophosphorylation of Tyr-419 and subsequent activation. The SH3 domain shows reduced affinity with the linker sequence between the SH2 and kinase domains which may account for the increased basal activity. Displays altered substrate specificity compared to isoform 1, showing weak affinity for synaptophysin and for peptide substrates containing class I or class II SH3 domain-binding motifs. Plays a role in L1CAM-mediated neurite elongation, possibly by acting downstream of L1CAM to drive cytoskeletal rearrangements involved in neurite outgrowth. Functionally, non-receptor protein tyrosine kinase which shows higher basal kinase activity than isoform 1, possibly due to weakened intramolecular interactions which enhance autophosphorylation of Tyr-419 and subsequent activation. The SH3 domain shows reduced affinity with the linker sequence between the SH2 and kinase domains which may account for the increased basal activity. Displays altered substrate specificity compared to isoform 1, showing weak affinity for synaptophysin and for peptide substrates containing class I or class II SH3 domain-binding motifs. Plays a role in neurite elongation. In Homo sapiens (Human), this protein is Proto-oncogene tyrosine-protein kinase Src.